The sequence spans 317 residues: tRNA dimethylallyltransferase (317 aa).

14 to 21 (GPTASGKS) is a binding site for ATP. 16–21 (TASGKS) is a substrate binding site. 2 interaction with substrate tRNA regions span residues 39–42 (DSVL) and 163–167 (QRIQR).

It belongs to the IPP transferase family. Monomer. Requires Mg(2+) as cofactor.

It carries out the reaction adenosine(37) in tRNA + dimethylallyl diphosphate = N(6)-dimethylallyladenosine(37) in tRNA + diphosphate. In terms of biological role, catalyzes the transfer of a dimethylallyl group onto the adenine at position 37 in tRNAs that read codons beginning with uridine, leading to the formation of N6-(dimethylallyl)adenosine (i(6)A). This Xylella fastidiosa (strain M12) protein is tRNA dimethylallyltransferase.